Consider the following 155-residue polypeptide: Cyanate hydratase (155 aa).

Active-site residues include Arg92, Glu95, and Ser118.

This sequence belongs to the cyanase family.

The enzyme catalyses cyanate + hydrogencarbonate + 3 H(+) = NH4(+) + 2 CO2. Functionally, catalyzes the reaction of cyanate with bicarbonate to produce ammonia and carbon dioxide. This Mycobacterium avium (strain 104) protein is Cyanate hydratase.